A 246-amino-acid polypeptide reads, in one-letter code: Small ribosomal subunit protein uS3 (246 aa).

In terms of domain architecture, KH type-2 spans 23-94; the sequence is LNEFLTRELA…RIELYAEKVA (72 aa). Residues 201 to 246 form a disordered region; it reads GPKKPLPDNVSVVEPKEEKIYETPETEYKIPPPSKPLDDLSEAKVL. Composition is skewed to basic and acidic residues over residues 214-228 and 236-246; these read EPKE…ETEY and PLDDLSEAKVL. Phosphothreonine is present on residues Thr223 and Thr226. Ser241 carries the phosphoserine modification.

The protein belongs to the universal ribosomal protein uS3 family. As to quaternary structure, interacts with LTV1; the interaction is RNA-independent.

Its subcellular location is the cytoplasm. It is found in the nucleus. Has DNA repair activity directed towards the mutagenic lesions 8-oxoguanine and abasic sites in DNA. It can cleave DNA containing 8-oxoguanine residues efficiently. Also acts as an ap lyase, cleaving phosphodiester bonds via a beta,delta elimination reaction. The protein is Small ribosomal subunit protein uS3 (RpS3) of Drosophila melanogaster (Fruit fly).